Here is a 350-residue protein sequence, read N- to C-terminus: Probable V-type proton ATPase subunit d 2 (350 aa).

This sequence belongs to the V-ATPase V0D/AC39 subunit family. In terms of assembly, V-ATPase is a heteromultimeric enzyme made up of two complexes: the ATP-hydrolytic V1 complex and the proton translocation V0 complex. The V1 complex consists of three catalytic AB heterodimers that form a heterohexamer, three peripheral stalks each consisting of EG heterodimers, one central rotor including subunits D and F, and the regulatory subunits C and H. The proton translocation complex V0 consists of the proton transport subunit a, a ring of proteolipid subunits c9c'', rotary subunit d, subunits e and f, and the accessory subunits VhaAC45 and ATP6AP2.

Its function is as follows. Subunit of the V0 complex of vacuolar(H+)-ATPase (V-ATPase), a multisubunit enzyme composed of a peripheral complex (V1) that hydrolyzes ATP and a membrane integral complex (V0) that translocates protons. V-ATPase is responsible for acidifying and maintaining the pH of intracellular compartments and in some cell types, is targeted to the plasma membrane, where it is responsible for acidifying the extracellular environment. May play a role in coupling of proton transport and ATP hydrolysis. The polypeptide is Probable V-type proton ATPase subunit d 2 (VhaAC39-2) (Drosophila melanogaster (Fruit fly)).